The following is a 272-amino-acid chain: Type III pantothenate kinase (272 aa).

6–13 is a binding site for ATP; that stretch reads NVNNTNTL. Residue 113 to 116 coordinates substrate; the sequence is GADR. The Proton acceptor role is filled by Asp-115. Asp-135 provides a ligand contact to K(+). Thr-138 is a binding site for ATP. Position 190 (Thr-190) interacts with substrate.

This sequence belongs to the type III pantothenate kinase family. Homodimer. The cofactor is NH4(+). Requires K(+) as cofactor.

The protein localises to the cytoplasm. It carries out the reaction (R)-pantothenate + ATP = (R)-4'-phosphopantothenate + ADP + H(+). It participates in cofactor biosynthesis; coenzyme A biosynthesis; CoA from (R)-pantothenate: step 1/5. Functionally, catalyzes the phosphorylation of pantothenate (Pan), the first step in CoA biosynthesis. The chain is Type III pantothenate kinase from Acidobacterium capsulatum (strain ATCC 51196 / DSM 11244 / BCRC 80197 / JCM 7670 / NBRC 15755 / NCIMB 13165 / 161).